Here is a 202-residue protein sequence, read N- to C-terminus: Alpha-latrotoxin-Lm1a (202 aa).

ANK repeat units lie at residues 95–109 (LYNA…VGFK), 110–120 (LMESPEININE), 122–132 (NDWPVASTLLR), 133–138 (SSNVNV), 142–161 (NSDT…DINT), 163–170 (NGHLNIVK), 171–182 (YLVEEEDLSVDG), Lys184, 185–191 (YGIDMTI), and 193–202 (TALDIATDLK). The tract at residues 175 to 181 (EEDLSVD) is 4C4.1 epitope.

This sequence belongs to the cationic peptide 01 (latrotoxin) family. 03 (alpha-latrotoxin) subfamily. In terms of assembly, homotetramer in membranes. Processed by furin-like proteases at both the N- and C-termini. Post-translationally, contains 1 disulfide bond. As to expression, expressed in venom gland, cephalothorax, and abdomen tissues from both males and females.

It is found in the secreted. The protein resides in the target cell membrane. Functionally, presynaptic neurotoxin that causes massive release of neurotransmitters from vertebrate (but not invertebrate) nerve terminals and endocrine cells via a complex mechanism involving activation of receptor(s) and toxin insertion into the plasma membrane with subsequent pore formation. Binds to neurexin-1-alpha (NRXN1) in a calcium dependent manner, adhesion G protein-coupled receptor L1 (ADGRL1, also termed latrophilin-1 and calcium-independent receptor of latrotoxin (CIRL)), and receptor-type tyrosine-protein phosphatase S (PTPRS), also termed PTP sigma. NRXN1 and PTPRS are suggested to provide a platform for binding and subsequent pore formation events. In contrast, binding to ADGRL1 does not involve oligomerization and channel formation, but direct downstream stimulation of the synaptic fusion machinery. In Latrodectus mactans (Black widow spider), this protein is Alpha-latrotoxin-Lm1a.